The primary structure comprises 495 residues: Cobyric acid synthase (495 aa).

The GATase cobBQ-type domain maps to 253–446 (KISIAIVYFP…FHGIFDGSAF (194 aa)). Cysteine 334 (nucleophile) is an active-site residue. Histidine 438 is an active-site residue.

It belongs to the CobB/CobQ family. CobQ subfamily.

It functions in the pathway cofactor biosynthesis; adenosylcobalamin biosynthesis. Its function is as follows. Catalyzes amidations at positions B, D, E, and G on adenosylcobyrinic A,C-diamide. NH(2) groups are provided by glutamine, and one molecule of ATP is hydrogenolyzed for each amidation. This chain is Cobyric acid synthase, found in Chlorobium phaeobacteroides (strain BS1).